The primary structure comprises 550 residues: DNA-directed RNA polymerase subunit alpha (550 aa).

The interval methionine 1–lysine 333 is alpha N-terminal domain (alpha-NTD). The tract at residues threonine 185–asparagine 258 is insert. An alpha C-terminal domain (alpha-CTD) region spans residues phenylalanine 378–phenylalanine 550.

The protein belongs to the RNA polymerase alpha chain family. In terms of assembly, in plastids the minimal PEP RNA polymerase catalytic core is composed of four subunits: alpha, beta, beta', and beta''. When a (nuclear-encoded) sigma factor is associated with the core the holoenzyme is formed, which can initiate transcription.

It localises to the plastid. The protein resides in the chloroplast. It carries out the reaction RNA(n) + a ribonucleoside 5'-triphosphate = RNA(n+1) + diphosphate. In terms of biological role, DNA-dependent RNA polymerase catalyzes the transcription of DNA into RNA using the four ribonucleoside triphosphates as substrates. The polypeptide is DNA-directed RNA polymerase subunit alpha (rpoA) (Chlamydomonas reinhardtii (Chlamydomonas smithii)).